The sequence spans 1297 residues: Insulin receptor-related protein (1297 aa).

The signal sequence occupies residues 1-26 (MAVPSLWPWGACLPVIFLSLGFGLDT). Residue N47 is glycosylated (N-linked (GlcNAc...) asparagine). Intrachain disulfides connect C214-C222, C216-C228, C229-C237, C233-C246, C249-C258, C262-C274, C280-C300, C304-C317, and C320-C324. N-linked (GlcNAc...) asparagine glycosylation occurs at N311. Residues N411, N492, N528, N616, and N634 are each glycosylated (N-linked (GlcNAc...) asparagine). Fibronectin type-III domains follow at residues 483–603 (QTRT…TLPA) and 607–707 (VPQD…AQEA). Residues C657 and C864 are joined by a disulfide bond. Disordered stretches follow at residues 666-687 (SNNDPRFDGEDGDPEAEMESDC) and 732-758 (SINKSPQRDSGRHRRAAGPLRLGGNSS). The span at 675–685 (EDGDPEAEMES) shows a compositional bias: acidic residues. The Extracellular portion of the chain corresponds to 747-921 (AAGPLRLGGN…PEEEDAGGLH (175 aa)). N-linked (GlcNAc...) asparagine glycosylation is found at N756, N885, and N898. A Fibronectin type-III 3 domain is found at 818–913 (IPGKVAWEAS…SVAFYILGPE (96 aa)). Residues 922 to 943 (VLLTATPVGLTLLIVLAALGFF) traverse the membrane as a helical segment. Residues 944 to 1297 (YGKKRNRTLY…CSPQNGGPGH (354 aa)) are Cytoplasmic-facing. The 276-residue stretch at 979–1254 (ISIIRELGQG…SIQEELRPSF (276 aa)) folds into the Protein kinase domain. Residues 985–993 (LGQGSFGMV) and K1013 contribute to the ATP site. The active-site Proton acceptor is the D1115. Residues Y1145 and Y1146 each carry the phosphotyrosine; by autocatalysis modification. The disordered stretch occupies residues 1267–1297 (GARGSLPTTDAEPDSSPTPRDCSPQNGGPGH). Over residues 1281-1297 (SSPTPRDCSPQNGGPGH) the composition is skewed to polar residues.

This sequence belongs to the protein kinase superfamily. Tyr protein kinase family. Insulin receptor subfamily. Probable tetramer of 2 alpha and 2 beta chains linked by disulfide bonds. The alpha chains contribute to the formation of the ligand-binding domain, while the beta chains carry the kinase domain. Autophosphorylated on tyrosine residues between pH 7.9 and pH 10.5.

The protein localises to the membrane. The enzyme catalyses L-tyrosyl-[protein] + ATP = O-phospho-L-tyrosyl-[protein] + ADP + H(+). Its function is as follows. Receptor with tyrosine-protein kinase activity. Functions as a pH sensing receptor which is activated by increased extracellular pH. Activates an intracellular signaling pathway that involves IRS1 and AKT1/PKB. In Homo sapiens (Human), this protein is Insulin receptor-related protein (INSRR).